We begin with the raw amino-acid sequence, 374 residues long: Chaperone protein DnaJ (374 aa).

The J domain maps to 5–71 (DLYAILGVCR…QKRASYDRFG (67 aa)). The segment at 132-210 (GVEKQIRIAT…CQGTGRVKDT (79 aa)) adopts a CR-type zinc-finger fold. 8 residues coordinate Zn(2+): C145, C148, C162, C165, C184, C187, C198, and C201. CXXCXGXG motif repeat units follow at residues 145–152 (CGECHGSG), 162–169 (CPTCNGAG), 184–191 (CPTCHGRG), and 198–205 (CNKCQGTG).

It belongs to the DnaJ family. Homodimer. Zn(2+) is required as a cofactor.

Its subcellular location is the cytoplasm. Functionally, participates actively in the response to hyperosmotic and heat shock by preventing the aggregation of stress-denatured proteins and by disaggregating proteins, also in an autonomous, DnaK-independent fashion. Unfolded proteins bind initially to DnaJ; upon interaction with the DnaJ-bound protein, DnaK hydrolyzes its bound ATP, resulting in the formation of a stable complex. GrpE releases ADP from DnaK; ATP binding to DnaK triggers the release of the substrate protein, thus completing the reaction cycle. Several rounds of ATP-dependent interactions between DnaJ, DnaK and GrpE are required for fully efficient folding. Also involved, together with DnaK and GrpE, in the DNA replication of plasmids through activation of initiation proteins. The polypeptide is Chaperone protein DnaJ (Dichelobacter nodosus (strain VCS1703A)).